A 216-amino-acid chain; its full sequence is GTP cyclohydrolase-2 (216 aa).

GTP is bound at residue Arg51–Glu55. Residues Cys56, Cys67, and Cys69 each coordinate Zn(2+). Residues Gln72, Glu94–Arg96, and Thr116 contribute to the GTP site. Asp128 serves as the catalytic Proton acceptor. The active-site Nucleophile is Arg130. The GTP site is built by Thr151 and Lys156.

This sequence belongs to the GTP cyclohydrolase II family. Zn(2+) is required as a cofactor.

It catalyses the reaction GTP + 4 H2O = 2,5-diamino-6-hydroxy-4-(5-phosphoribosylamino)-pyrimidine + formate + 2 phosphate + 3 H(+). It functions in the pathway cofactor biosynthesis; riboflavin biosynthesis; 5-amino-6-(D-ribitylamino)uracil from GTP: step 1/4. Catalyzes the conversion of GTP to 2,5-diamino-6-ribosylamino-4(3H)-pyrimidinone 5'-phosphate (DARP), formate and pyrophosphate. This Haemophilus influenzae (strain 86-028NP) protein is GTP cyclohydrolase-2.